The sequence spans 433 residues: Gamma-glutamyl phosphate reductase 1 (433 aa).

It belongs to the gamma-glutamyl phosphate reductase family.

It is found in the cytoplasm. The catalysed reaction is L-glutamate 5-semialdehyde + phosphate + NADP(+) = L-glutamyl 5-phosphate + NADPH + H(+). It participates in amino-acid biosynthesis; L-proline biosynthesis; L-glutamate 5-semialdehyde from L-glutamate: step 2/2. Functionally, catalyzes the NADPH-dependent reduction of L-glutamate 5-phosphate into L-glutamate 5-semialdehyde and phosphate. The product spontaneously undergoes cyclization to form 1-pyrroline-5-carboxylate. This is Gamma-glutamyl phosphate reductase 1 from Synechocystis sp. (strain ATCC 27184 / PCC 6803 / Kazusa).